We begin with the raw amino-acid sequence, 273 residues long: DNA repair protein RecO (273 aa).

This sequence belongs to the RecO family.

Functionally, involved in DNA repair and RecF pathway recombination. This chain is DNA repair protein RecO, found in Mycolicibacterium gilvum (strain PYR-GCK) (Mycobacterium gilvum (strain PYR-GCK)).